The chain runs to 1544 residues: Zinc finger protein GLI2 (1544 aa).

The interval 1 to 26 (METSAPAPALEKKEAKSGLLEDSSFP) is disordered. Ser145, Ser230, Ser232, and Ser238 each carry phosphoserine. The tract at residues 338 to 364 (SSSSSNCLNDANQNKQNSESAVSSTVN) is disordered. A Phosphoserine; by DYRK2 modification is found at Ser385. The segment at 417–444 (TNCHWADCTKEYDTQEQLVHHINNEHIH) adopts a C2H2-type 1 zinc-finger fold. The segment at 455–477 (QACTREQKPFKAQYMLVVHMRRH) adopts a C2H2-type 2; degenerate zinc-finger fold. 3 consecutive C2H2-type zinc fingers follow at residues 483–507 (HKCT…LRSH), 513–538 (YVCE…NRTH), and 544–569 (YICK…KTVH). Disordered regions lie at residues 557–619 (DPSS…TSHT) and 635–682 (GLCQ…ALAD). Residues 569–585 (HGPDAHVTKKQRNDVHV) show a composition bias toward basic and acidic residues. Residues 637–657 (CQSSPGAQSSCSSEPSPLGSA) show a composition bias toward low complexity. Residue Ser707 is modified to Phosphoserine. Thr708 carries the post-translational modification Phosphothreonine. Lys740 carries the post-translational modification N6-acetyllysine; by EP300. Disordered stretches follow at residues 781–800 (SQLQ…AYTV), 805–861 (SGIS…PGLL), 908–963 (ALPG…RRPD), 995–1016 (VQSH…RPPS), 1166–1220 (FGQY…CLGM), and 1422–1457 (GGCP…VSST). 2 stretches are compositionally biased toward polar residues: residues 790–800 (STSTMSSAYTV) and 805–814 (SGISPYFSSR). Basic and acidic residues predominate over residues 954–963 (RASDPVRRPD). Ser997 carries the phosphoserine; by DYRK2 modification. Polar residues-rich tracts occupy residues 997 to 1009 (SHPS…TRNA), 1173 to 1190 (NPQS…TQPH), and 1200 to 1209 (SRGSYTQQPR).

This sequence belongs to the GLI C2H2-type zinc-finger protein family. Interacts with ZIC1 and ZIC2. Interacts with STK36. Interacts with SUFU; this inhibits transcriptional activation mediated by GLI2. Interacts (via C-terminal internal region) with FOXC1 (via N-terminus); this interaction is direct and increases GLI2 DNA-binding and transcriptional activity through a smoothened (SMO)-independent Hedgehog (Hh) signaling pathway. Phosphorylated in vitro by ULK3. Phosphorylated by DYRK2; this inhibits GLI2 transcription factor activity and promotes proteasomal degradation of GLI2. In terms of processing, acetylation at Lys-740 inhibits Hh target gene expression, probably by impeding entry into chromatin thus preventing promoter occupancy.

It is found in the nucleus. The protein localises to the cytoplasm. The protein resides in the cell projection. It localises to the cilium. In terms of biological role, functions as a transcription regulator in the hedgehog (Hh) pathway. Functions as a transcriptional activator. May also function as transcriptional repressor. Requires STK36 for full transcriptional activator activity. Binds to the DNA sequence 5'-GAACCACCCA-3' which is part of the TRE-2S regulatory element. Is involved in the smoothened (SHH) signaling pathway. Required for normal skeleton development. This is Zinc finger protein GLI2 from Mus musculus (Mouse).